Here is a 257-residue protein sequence, read N- to C-terminus: Ras-related protein Rab-26 (257 aa).

The segment at 1–53 (MSRKKTPKSKGGSVPAASTLPAAANGPRLAHPRTARPGPEAPPNGPPQSGRPS) is disordered. Positions 73, 74, 75, 76, 77, 78, 79, 96, and 97 each coordinate GTP. Position 78 (threonine 78) interacts with Mg(2+). 2 consecutive short sequence motifs (switch) follow at residues 87–102 (GAFLAGTFISTVGIDF) and 120–137 (DTAGQERFRSVTHAYYRD). 2 residues coordinate Mg(2+): threonine 97 and aspartate 120. Glycine 123, asparagine 178, lysine 179, aspartate 181, alanine 209, and lysine 210 together coordinate GTP. S-geranylgeranyl cysteine attachment occurs at residues cysteine 254 and cysteine 255.

Belongs to the small GTPase superfamily. Rab family. Interacts with ADRA2B. Interacts with RIMS1. It depends on Mg(2+) as a cofactor. In terms of tissue distribution, expressed in pancreas, kidney, brain, submandibular gland, and lung.

It localises to the cytoplasmic vesicle. Its subcellular location is the secretory vesicle membrane. It is found in the golgi apparatus membrane. It carries out the reaction GTP + H2O = GDP + phosphate + H(+). Regulated by guanine nucleotide exchange factors (GEFs) which promote the exchange of bound GDP for free GTP. Regulated by GTPase activating proteins (GAPs) which increase the GTP hydrolysis activity. Inhibited by GDP dissociation inhibitors (GDIs). The small GTPases Rab are key regulators of intracellular membrane trafficking, from the formation of transport vesicles to their fusion with membranes. Rabs cycle between an inactive GDP-bound form and an active GTP-bound form that is able to recruit to membranes different set of downstream effectors directly responsible for vesicle formation, movement, tethering and fusion. RAB26 mediates transport of ADRA2A and ADRA2B from the Golgi to the cell membrane. Plays a role in the maturation of zymogenic granules and in pepsinogen secretion in the stomach. Plays a role in the secretion of amylase from acinar granules in the parotid gland. The sequence is that of Ras-related protein Rab-26 from Rattus norvegicus (Rat).